Consider the following 96-residue polypeptide: Conotoxin Mr15.1 (96 aa).

Residues 1–20 (MSTLKMMLLILLLLLPLATF) form the signal peptide. A propeptide spanning residues 21–57 (DSDGQAIPGGGIPSAVNSRVGRLLGGDEKSGRSLEKR) is cleaved from the precursor.

It belongs to the conotoxin N superfamily. Post-translationally, contains 4 disulfide bonds. In terms of tissue distribution, expressed by the venom duct.

It is found in the secreted. This chain is Conotoxin Mr15.1, found in Conus marmoreus (Marble cone).